The primary structure comprises 375 residues: GDSL esterase/lipase At5g45960 (375 aa).

Residues 1–28 form the signal peptide; that stretch reads MRSHHRHFSSYVSFILFLFLFFISFSSS. The Nucleophile role is filled by Ser-54. Residue Asn-340 is glycosylated (N-linked (GlcNAc...) asparagine). Residues Asp-348 and His-351 contribute to the active site.

Belongs to the 'GDSL' lipolytic enzyme family.

Its subcellular location is the secreted. The sequence is that of GDSL esterase/lipase At5g45960 from Arabidopsis thaliana (Mouse-ear cress).